We begin with the raw amino-acid sequence, 456 residues long: IQ domain-containing protein IQM3 (456 aa).

An IQ domain is found at 46-75 (TRLAAVKVQKVYRSYRTRRRLADSVVVAEE). The segment at 315-358 (SEDSDSYDDYVKSNGGSEPEPLKKEDTTFQAETETDENGNGTVG) is disordered.

In terms of tissue distribution, expressed in roots, rosette and cauline leaves, flowers and siliques, and at lower levels in stems.

The protein resides in the cytoplasm. It localises to the nucleus. Functionally, may be involved in biotic and abiotic stress responses. The sequence is that of IQ domain-containing protein IQM3 from Arabidopsis thaliana (Mouse-ear cress).